A 120-amino-acid chain; its full sequence is Holo-[acyl-carrier-protein] synthase (120 aa).

Asp-8 and Glu-58 together coordinate Mg(2+).

The protein belongs to the P-Pant transferase superfamily. AcpS family. Mg(2+) is required as a cofactor.

The protein localises to the cytoplasm. The enzyme catalyses apo-[ACP] + CoA = holo-[ACP] + adenosine 3',5'-bisphosphate + H(+). Transfers the 4'-phosphopantetheine moiety from coenzyme A to a Ser of acyl-carrier-protein. The protein is Holo-[acyl-carrier-protein] synthase of Limosilactobacillus reuteri (strain DSM 20016) (Lactobacillus reuteri).